We begin with the raw amino-acid sequence, 245 residues long: Sec-independent protein translocase protein TatC (245 aa).

6 helical membrane passes run 17–37, 73–93, 107–127, 159–179, 191–207, and 210–230; these read FISV…RSYI, FFAA…KFVA, FVSF…FVVV, VVVA…FAKI, FRIA…FMTP, and VLSQ…SILI.

The protein belongs to the TatC family. As to quaternary structure, the Tat system comprises two distinct complexes: a TatABC complex, containing multiple copies of TatA, TatB and TatC subunits, and a separate TatA complex, containing only TatA subunits. Substrates initially bind to the TatABC complex, which probably triggers association of the separate TatA complex to form the active translocon.

The protein localises to the cell inner membrane. Functionally, part of the twin-arginine translocation (Tat) system that transports large folded proteins containing a characteristic twin-arginine motif in their signal peptide across membranes. Together with TatB, TatC is part of a receptor directly interacting with Tat signal peptides. This Campylobacter jejuni subsp. jejuni serotype O:2 (strain ATCC 700819 / NCTC 11168) protein is Sec-independent protein translocase protein TatC.